A 1042-amino-acid polypeptide reads, in one-letter code: Probable serine/threonine protein kinase IRE4 (1042 aa).

Basic and acidic residues-rich tracts occupy residues 1–10 (MAEENRKDRG), 102–115 (EEIKLRGKNSGKDE), and 314–327 (QRNEAGQKFKRRDK). Disordered stretches follow at residues 1 to 75 (MAEE…GTKL), 90 to 115 (PPKYACSSTTSSEEIKLRGKNSGKDE), and 297 to 327 (WGSTPRVDDSGSGYPEYQRNEAGQKFKRRDK). Residues 402 to 421 (CRICEEEVPLFHLEPHSYIC) form a C2H2-type; atypical zinc finger. Residues 670–955 (FEIIKPISRG…AAEVKSHPFF (286 aa)) enclose the Protein kinase domain. Residues 676-684 (ISRGAFGKV) and K699 contribute to the ATP site. D793 serves as the catalytic Proton acceptor. Residues 830–850 (ESDVSPRTNSHHFQKNQEEER) are disordered. S854 is subject to Phosphoserine. The AGC-kinase C-terminal domain occupies 956-1042 (QGVDWENLAL…KLFFLLLCVF (87 aa)).

The protein belongs to the protein kinase superfamily. AGC Ser/Thr protein kinase family.

The enzyme catalyses L-seryl-[protein] + ATP = O-phospho-L-seryl-[protein] + ADP + H(+). The catalysed reaction is L-threonyl-[protein] + ATP = O-phospho-L-threonyl-[protein] + ADP + H(+). The polypeptide is Probable serine/threonine protein kinase IRE4 (Arabidopsis thaliana (Mouse-ear cress)).